The primary structure comprises 277 residues: Probable xyloglucan endotransglucosylase/hydrolase protein 11 (277 aa).

The first 24 residues, 1 to 24, serve as a signal peptide directing secretion; it reads MRGSDQKILLMVMVVVAVVAAAQG. Positions 32 to 209 constitute a GH16 domain; it reads VTWGNNYYQT…PKQMPYIAKF (178 aa). N-linked (GlcNAc...) asparagine glycosylation is present at N50. E107 (nucleophile) is an active-site residue. Residues 123-125 and 133-135 each bind xyloglucan; these read NTN and GKD. N-linked (GlcNAc...) asparagine glycosylation is present at N194. Disulfide bonds link C217-C227 and C260-C273. Position 265 (R265) interacts with xyloglucan.

This sequence belongs to the glycosyl hydrolase 16 family. XTH group 1 subfamily. In terms of processing, contains at least one intrachain disulfide bond essential for its enzymatic activity.

The protein localises to the secreted. The protein resides in the cell wall. It localises to the extracellular space. It is found in the apoplast. It carries out the reaction breaks a beta-(1-&gt;4) bond in the backbone of a xyloglucan and transfers the xyloglucanyl segment on to O-4 of the non-reducing terminal glucose residue of an acceptor, which can be a xyloglucan or an oligosaccharide of xyloglucan.. In terms of biological role, may catalyze xyloglucan endohydrolysis (XEH) and/or endotransglycosylation (XET). Cleaves and religates xyloglucan polymers, an essential constituent of the primary cell wall, and thereby participates in cell wall construction of growing tissues. The polypeptide is Probable xyloglucan endotransglucosylase/hydrolase protein 11 (XTH11) (Arabidopsis thaliana (Mouse-ear cress)).